Consider the following 125-residue polypeptide: MPKKSFQRTERISVQIRRDLGAFVQAAVRDHGLPSMSVSDVEVTRDMAHAKVFVTALQAERSFEAVAGLKALARELRMQLAQTMRLRFVPELHFHYDDSLDRGERIDTLLRDLIPPADAEKDESG.

It belongs to the RbfA family. Monomer. Binds 30S ribosomal subunits, but not 50S ribosomal subunits or 70S ribosomes.

The protein localises to the cytoplasm. In terms of biological role, one of several proteins that assist in the late maturation steps of the functional core of the 30S ribosomal subunit. Associates with free 30S ribosomal subunits (but not with 30S subunits that are part of 70S ribosomes or polysomes). Required for efficient processing of 16S rRNA. May interact with the 5'-terminal helix region of 16S rRNA. The chain is Ribosome-binding factor A from Xylella fastidiosa (strain M23).